The sequence spans 499 residues: MALPTLPSNWHSRSRVLEQQIVRQREQEARLRHQWDQTNQYFKQSNVCSSKQAQWSSRQSYQKSMNAFHQEKQKEEKKKTLEYRREQLRKLLQEERDLLEEELKELRCNKEHNVSDMRQRTEELKSAREERQKQLAEELLYEQWKKNNVKLREVESSLFKKHVVDAWGEQITARNQEKEEEDMEKKRLENEYELARREAIERMKRDKEKRQQQEEELARVLKWQMEELKLKDLEAKKLKKEQEDLLRQQWEIEELEEERRKMEQCRKKTELSHFLSRQYNAQMKRRAQQVQEELEMDKKILSALISKEDEDQHLQSARREQAIADVAWMKHVIEEQLHLERQREAELDTLFREEAKQVWAKRETEWERERNARNRLMKEVLAGRQMQIQERIERNQLAQAESVMNRERLLRQLEEARQFTSREKKQEEEQKTARRTELEAQIAEQLLKGKEAIVQQEEEEKEFKLAEDLENDLLQQEAEIMTQRGYQKKTYSRPRTAWS.

Coiled-coil stretches lie at residues 17–143 (LEQQ…LYEQ), 169–304 (EQIT…LSAL), and 405–485 (NRER…TQRG). The trichohyalin/plectin homology domain stretch occupies residues 260–426 (RKMEQCRKKT…RQFTSREKKQ (167 aa)).

Belongs to the TCHP family.

It is found in the cytoplasm. The protein localises to the cytoskeleton. It localises to the microtubule organizing center. The protein resides in the centrosome. In terms of biological role, may act as a 'capping' or 'branching' protein for keratin filaments in the cell periphery. May regulate K8/K18 filament and desmosome organization mainly at the apical or peripheral regions of simple epithelial cells. The polypeptide is Trichoplein keratin filament-binding protein (Xenopus laevis (African clawed frog)).